The sequence spans 321 residues: Glutaminase (321 aa).

Substrate contacts are provided by Ser-69, Asn-120, Glu-165, Asn-172, Tyr-196, Tyr-248, and Val-266.

It belongs to the glutaminase family. Homotetramer.

It carries out the reaction L-glutamine + H2O = L-glutamate + NH4(+). This chain is Glutaminase, found in Bacteroides fragilis (strain ATCC 25285 / DSM 2151 / CCUG 4856 / JCM 11019 / LMG 10263 / NCTC 9343 / Onslow / VPI 2553 / EN-2).